A 40-amino-acid chain; its full sequence is Photosystem II reaction center protein Y (40 aa).

The helical transmembrane segment at 5 to 23 (LVLVASPILLALGWAGFNI) threads the bilayer.

Belongs to the PsbY family. PSII is composed of 1 copy each of membrane proteins PsbA, PsbB, PsbC, PsbD, PsbE, PsbF, PsbH, PsbI, PsbJ, PsbK, PsbL, PsbM, PsbT, PsbX, PsbY, PsbZ, Psb30/Ycf12, peripheral proteins PsbO, CyanoQ (PsbQ), PsbU, PsbV and a large number of cofactors. It forms dimeric complexes.

The protein resides in the cellular thylakoid membrane. Functionally, loosely associated component of the core of photosystem II (PSII), it is not always seen in crystals. PSII is a light-driven water plastoquinone oxidoreductase, using light energy to abstract electrons from H(2)O, generating a proton gradient subsequently used for ATP formation. In Synechococcus sp. (strain WH7803), this protein is Photosystem II reaction center protein Y.